A 1043-amino-acid polypeptide reads, in one-letter code: Calcium-transporting ATPase 1, plasma membrane-type (1043 aa).

The Cytoplasmic segment spans residues 1–178 (MSFIRKKSME…FLWDASQDMT (178 aa)). 2 helical membrane-spanning segments follow: residues 179-199 (LLLL…TEGW) and 202-222 (GMYD…ITAA). Residues 223-258 (SDYKQSLQFRDLDKEKKKIDVQVTRDGYRQKVSIYD) lie on the Cytoplasmic side of the membrane. Transmembrane regions (helical) follow at residues 259 to 279 (IVVG…DGLF) and 356 to 376 (VATI…TVLM). Residues 377 to 395 (ARFLLGKAGAPGGLLRWRM) are Cytoplasmic-facing. A helical transmembrane segment spans residues 396–416 (VDALAVLNFFAVAVTIIVVAV). The active-site 4-aspartylphosphate intermediate is the aspartate 460. 2 residues coordinate Mg(2+): aspartate 761 and aspartate 765. Residues 824–844 (LTVNVVALMVNFISASFTGSA) form a helical membrane-spanning segment. Proline 845 is a topological domain (cytoplasmic). The next 2 membrane-spanning stretches (helical) occupy residues 846–866 (LTIV…ALAL) and 891–911 (VMWR…GVLL). Topologically, residues 912 to 955 (LRGKSLLQINGPQADSLLNTFVFNTFVFCQVFNEVNSREMEKIN) are cytoplasmic. Transmembrane regions (helical) follow at residues 956–976 (VFSG…TAGF) and 998–1018 (WLTS…LKCI). At 1019-1043 (PVESGSDASDRHDGYRPIPTGPSAV) the chain is on the cytoplasmic side. Residues 1023–1043 (GSDASDRHDGYRPIPTGPSAV) form a disordered region.

It belongs to the cation transport ATPase (P-type) (TC 3.A.3) family. Type IIB subfamily.

The protein localises to the membrane. It catalyses the reaction Ca(2+)(in) + ATP + H2O = Ca(2+)(out) + ADP + phosphate + H(+). Activated by calmodulin. Its function is as follows. This magnesium-dependent enzyme catalyzes the hydrolysis of ATP coupled with the translocation of calcium from the cytosol out of the cell, into the endoplasmic reticulum, or into organelles. This chain is Calcium-transporting ATPase 1, plasma membrane-type, found in Oryza sativa subsp. japonica (Rice).